Here is a 316-residue protein sequence, read N- to C-terminus: Type II restriction enzyme BsuBI (316 aa).

It belongs to the BsuBI/PstI type II restriction endonuclease family. As to quaternary structure, homodimer. Requires Mg(2+) as cofactor.

The enzyme catalyses Endonucleolytic cleavage of DNA to give specific double-stranded fragments with terminal 5'-phosphates.. A P subtype restriction enzyme that recognizes the double-stranded sequence 5'-CTGCAG-3' and cleaves after A-5. The protein is Type II restriction enzyme BsuBI (hsdBR) of Bacillus subtilis.